The primary structure comprises 647 residues: Putative lipase YDL109C (647 aa).

The Charge relay system role is filled by S274. The tract at residues 502-523 is disordered; it reads PPPSPTLYEGTAAKEGETRKTR. Residues 513-523 show a composition bias toward basic and acidic residues; the sequence is AAKEGETRKTR.

The protein belongs to the putative lipase ROG1 family.

Involved in lipid metabolism. The sequence is that of Putative lipase YDL109C from Saccharomyces cerevisiae (strain ATCC 204508 / S288c) (Baker's yeast).